A 392-amino-acid chain; its full sequence is Histidinol-phosphate aminotransferase (392 aa).

The disordered stretch occupies residues M1 to P24. K236 carries the post-translational modification N6-(pyridoxal phosphate)lysine.

This sequence belongs to the class-II pyridoxal-phosphate-dependent aminotransferase family. Histidinol-phosphate aminotransferase subfamily. Homodimer. It depends on pyridoxal 5'-phosphate as a cofactor.

It catalyses the reaction L-histidinol phosphate + 2-oxoglutarate = 3-(imidazol-4-yl)-2-oxopropyl phosphate + L-glutamate. It functions in the pathway amino-acid biosynthesis; L-histidine biosynthesis; L-histidine from 5-phospho-alpha-D-ribose 1-diphosphate: step 7/9. The polypeptide is Histidinol-phosphate aminotransferase (Xanthobacter autotrophicus (strain ATCC BAA-1158 / Py2)).